The chain runs to 156 residues: 3-dehydroquinate dehydratase (156 aa).

The Proton acceptor role is filled by Tyr31. Substrate contacts are provided by Asn83, His89, and Asp96. The Proton donor role is filled by His109. Residues 110–111 (LS) and Arg120 each bind substrate.

The protein belongs to the type-II 3-dehydroquinase family. As to quaternary structure, homododecamer.

The catalysed reaction is 3-dehydroquinate = 3-dehydroshikimate + H2O. It participates in metabolic intermediate biosynthesis; chorismate biosynthesis; chorismate from D-erythrose 4-phosphate and phosphoenolpyruvate: step 3/7. Functionally, catalyzes a trans-dehydration via an enolate intermediate. This chain is 3-dehydroquinate dehydratase, found in Chromobacterium violaceum (strain ATCC 12472 / DSM 30191 / JCM 1249 / CCUG 213 / NBRC 12614 / NCIMB 9131 / NCTC 9757 / MK).